The sequence spans 224 residues: Ribonuclease T (224 aa).

A compositionally biased stretch (acidic residues) spans 1–11 (MSEDLYEDDLD). Positions 1-22 (MSEDLYEDDLDTQGSSGPRHPM) are disordered. Positions 32–206 (VVVDVETGGF…YDTEKTAELF (175 aa)) constitute an Exonuclease domain. Mg(2+) is bound by residues Asp35, Glu37, His193, and Asp198. His193 acts as the Proton donor/acceptor in catalysis.

This sequence belongs to the RNase T family. Homodimer. Mg(2+) serves as cofactor.

Functionally, trims short 3' overhangs of a variety of RNA species, leaving a one or two nucleotide 3' overhang. Responsible for the end-turnover of tRNA: specifically removes the terminal AMP residue from uncharged tRNA (tRNA-C-C-A). Also appears to be involved in tRNA biosynthesis. This chain is Ribonuclease T, found in Pseudomonas putida (strain ATCC 700007 / DSM 6899 / JCM 31910 / BCRC 17059 / LMG 24140 / F1).